We begin with the raw amino-acid sequence, 345 residues long: Fructose-bisphosphate aldolase (345 aa).

Serine 53 contacts D-glyceraldehyde 3-phosphate. Aspartate 95 (proton donor) is an active-site residue. 4 residues coordinate Zn(2+): histidine 96, aspartate 131, glutamate 161, and histidine 212. Position 213 (glycine 213) interacts with dihydroxyacetone phosphate. Histidine 252 is a Zn(2+) binding site. Residues 253–255 and 274–277 each bind dihydroxyacetone phosphate; these read GGS and NVDT.

The protein belongs to the class II fructose-bisphosphate aldolase family. Requires Zn(2+) as cofactor.

It carries out the reaction beta-D-fructose 1,6-bisphosphate = D-glyceraldehyde 3-phosphate + dihydroxyacetone phosphate. It participates in carbohydrate degradation; glycolysis; D-glyceraldehyde 3-phosphate and glycerone phosphate from D-glucose: step 4/4. Its function is as follows. Catalyzes the aldol condensation of dihydroxyacetone phosphate (DHAP or glycerone-phosphate) with glyceraldehyde 3-phosphate (G3P) to form fructose 1,6-bisphosphate (FBP) in gluconeogenesis and the reverse reaction in glycolysis. The sequence is that of Fructose-bisphosphate aldolase (fba) from Mycobacterium leprae (strain TN).